Reading from the N-terminus, the 372-residue chain is Alanine dehydrogenase 1 (372 aa).

Histidine 94 is an active-site residue. NAD(+) is bound at residue 170–200 (TYVIFGGGVAATNAANVALGLNAKVIIIELN).

The protein belongs to the AlaDH/PNT family.

It catalyses the reaction L-alanine + NAD(+) + H2O = pyruvate + NH4(+) + NADH + H(+). It functions in the pathway amino-acid degradation; L-alanine degradation via dehydrogenase pathway; NH(3) and pyruvate from L-alanine: step 1/1. Its function is as follows. May play a role in cell wall synthesis as L-alanine is an important constituent of the peptidoglycan layer. This Staphylococcus aureus (strain MSSA476) protein is Alanine dehydrogenase 1 (ald1).